Reading from the N-terminus, the 134-residue chain is uncharacterized protein (134 aa).

The next 3 membrane-spanning stretches (helical) occupy residues 26-46, 55-75, and 101-121; these read VAVFLVRAVILLIFAAFGNIG, LLKFSIINIIMLLFGIAQIIV, and YAPMILLLAVNLCGAVFGLIL.

The protein resides in the membrane. This is an uncharacterized protein from Dictyostelium discoideum (Social amoeba).